Here is a 132-residue protein sequence, read N- to C-terminus: Transcription antitermination protein NusB (132 aa).

The protein belongs to the NusB family.

Functionally, involved in transcription antitermination. Required for transcription of ribosomal RNA (rRNA) genes. Binds specifically to the boxA antiterminator sequence of the ribosomal RNA (rrn) operons. In Lachnoclostridium phytofermentans (strain ATCC 700394 / DSM 18823 / ISDg) (Clostridium phytofermentans), this protein is Transcription antitermination protein NusB.